The following is a 243-amino-acid chain: Ribosomal RNA small subunit methyltransferase J (243 aa).

S-adenosyl-L-methionine contacts are provided by residues E112–R113 and D164.

It belongs to the methyltransferase superfamily. RsmJ family.

It localises to the cytoplasm. The catalysed reaction is guanosine(1516) in 16S rRNA + S-adenosyl-L-methionine = N(2)-methylguanosine(1516) in 16S rRNA + S-adenosyl-L-homocysteine + H(+). Functionally, specifically methylates the guanosine in position 1516 of 16S rRNA. The protein is Ribosomal RNA small subunit methyltransferase J of Legionella pneumophila subsp. pneumophila (strain Philadelphia 1 / ATCC 33152 / DSM 7513).